We begin with the raw amino-acid sequence, 192 residues long: Thymidine kinase (192 aa).

ATP-binding positions include 9 to 16 (SAMNAGKS) and 87 to 90 (DECQ). Glu88 (proton acceptor) is an active-site residue. 4 residues coordinate Zn(2+): Cys145, Cys147, Cys182, and His185.

The protein belongs to the thymidine kinase family. Homotetramer.

Its subcellular location is the cytoplasm. It carries out the reaction thymidine + ATP = dTMP + ADP + H(+). The sequence is that of Thymidine kinase from Vibrio parahaemolyticus serotype O3:K6 (strain RIMD 2210633).